The chain runs to 342 residues: Methylthioribose-1-phosphate isomerase (342 aa).

Substrate-binding positions include 49 to 51, Arg-86, and Gln-187; that span reads RGA. Catalysis depends on Asp-228, which acts as the Proton donor. 238-239 provides a ligand contact to substrate; it reads NK.

Belongs to the eIF-2B alpha/beta/delta subunits family. MtnA subfamily.

The catalysed reaction is 5-(methylsulfanyl)-alpha-D-ribose 1-phosphate = 5-(methylsulfanyl)-D-ribulose 1-phosphate. It functions in the pathway amino-acid biosynthesis; L-methionine biosynthesis via salvage pathway; L-methionine from S-methyl-5-thio-alpha-D-ribose 1-phosphate: step 1/6. Catalyzes the interconversion of methylthioribose-1-phosphate (MTR-1-P) into methylthioribulose-1-phosphate (MTRu-1-P). The protein is Methylthioribose-1-phosphate isomerase of Klebsiella pneumoniae (strain 342).